A 293-amino-acid chain; its full sequence is Small ribosomal subunit protein uS3 (293 aa).

A KH type-2 domain is found at 39–107 (VREYLKAKLK…PVAVNIEEVR (69 aa)). Positions 210-293 (RNDLPAVETP…PATAADGKGE (84 aa)) are disordered. Over residues 219–238 (PRPEEERRPRGPRRDGRPGG) the composition is skewed to basic and acidic residues.

It belongs to the universal ribosomal protein uS3 family. As to quaternary structure, part of the 30S ribosomal subunit. Forms a tight complex with proteins S10 and S14.

Binds the lower part of the 30S subunit head. Binds mRNA in the 70S ribosome, positioning it for translation. The protein is Small ribosomal subunit protein uS3 of Paracidovorax citrulli (strain AAC00-1) (Acidovorax citrulli).